We begin with the raw amino-acid sequence, 173 residues long: MDMNMEKIFEDSVPCRVRAKRGCATHPRSIAERAAMMMIRSGGSGGSGGVSCQDFGNQAKKDCSHMRCRTCCKSRGFECSTHVRSTWVPATKRRERQQQLATVQPQTQLPRGESVPKRHRENLPATSSSLVCTRIPFHSGICHCNVKYLFMCIYICLLLYGREIYNEMQAAFL.

The Zn(2+) site is built by C52, C63, C68, C72, and C79. A DNA-binding region (zn(2)-C6 fungal-type; degenerate) is located at residues 52-79 (CQDFGNQAKKDCSHMRCRTCCKSRGFEC). Residues 100–110 (LATVQPQTQLP) are compositionally biased toward low complexity. The interval 100 to 121 (LATVQPQTQLPRGESVPKRHRE) is disordered.

The protein belongs to the SHI protein family.

The protein localises to the nucleus. Transcription activator that binds DNA on 5'-ACTCTAC-3' and promotes auxin homeostasis-regulating gene expression (e.g. YUC genes), as well as genes affecting stamen development, cell expansion and timing of flowering. Synergistically with other SHI-related proteins, regulates gynoecium, stamen and leaf development in a dose-dependent manner, controlling apical-basal patterning. Promotes style and stigma formation, and influence vascular development during gynoecium development. May also have a role in the formation and/or maintenance of the shoot apical meristem (SAM). The sequence is that of Protein SHI RELATED SEQUENCE 8 (SRS8) from Arabidopsis thaliana (Mouse-ear cress).